Reading from the N-terminus, the 308-residue chain is tRNA pseudouridine synthase B (308 aa).

Asp-49 functions as the Nucleophile in the catalytic mechanism.

The protein belongs to the pseudouridine synthase TruB family. Type 1 subfamily.

The catalysed reaction is uridine(55) in tRNA = pseudouridine(55) in tRNA. Functionally, responsible for synthesis of pseudouridine from uracil-55 in the psi GC loop of transfer RNAs. The polypeptide is tRNA pseudouridine synthase B (Nitrosococcus oceani (strain ATCC 19707 / BCRC 17464 / JCM 30415 / NCIMB 11848 / C-107)).